The primary structure comprises 348 residues: Succinoglycan biosynthesis protein ExoO (348 aa).

A disordered region spans residues 322–348; the sequence is HSAPRAAPVTAAAERSPLGNDPRISKG. Positions 324–334 are enriched in low complexity; sequence APRAAPVTAAA.

Belongs to the glycosyltransferase 2 family.

Its subcellular location is the cytoplasm. The protein operates within glycan metabolism; exopolysaccharide biosynthesis. Glycosyltransferase required for the synthesis of succinoglycan (EPS I). Needed for the addition of the fifth sugar (glucose), catalyzes the formation of a beta-1,6 linkage between the fourth and fifth sugar. The polypeptide is Succinoglycan biosynthesis protein ExoO (exoO) (Rhizobium meliloti (strain 1021) (Ensifer meliloti)).